Reading from the N-terminus, the 808-residue chain is Protein translocase subunit SecA 2 (808 aa).

ATP is bound by residues Q124, 142–146 (GEGKT), and D535.

The protein belongs to the SecA family. Monomer and homodimer. Part of the essential Sec protein translocation apparatus which comprises SecA, SecYEG and auxiliary proteins SecDF. Other proteins may also be involved.

It localises to the cell membrane. The protein localises to the cytoplasm. It carries out the reaction ATP + H2O + cellular proteinSide 1 = ADP + phosphate + cellular proteinSide 2.. Part of the Sec protein translocase complex. Interacts with the SecYEG preprotein conducting channel. Has a central role in coupling the hydrolysis of ATP to the transfer of proteins into and across the cell membrane, serving as an ATP-driven molecular motor driving the stepwise translocation of polypeptide chains across the membrane. This is Protein translocase subunit SecA 2 from Mycobacterium bovis (strain BCG / Pasteur 1173P2).